Reading from the N-terminus, the 469-residue chain is MNPNQKIITIGSVSLTIATVCFLMQIAILVTTVTLHFKQYECDSPANNQVMPCEPIIIERNITEIVYLTNTTIEKEICPKLVEYRNWSKPQCKITGFAPFSKDNSIRLSAGGDIWVTREPYVSCDPGKCYQFALGQGTTLDNKHSNDTIHDRIPHRTLLMNELGVPFHLGTRQVCIAWSSSSCHDGKAWLHVCVTGDDKNATASFIYDGRLVDSIGSWSQNILRTQESECVCINGTCTVVMTDGSASGRADTRILFIEEGKIVHISPLSGSAQHVEECSCYPRYPGVRCICRDNWKGSNRPVVDINVKDYSIDSRYVCSGLVGDTPRNNDRSSNSNCRNPNNDKGNHGVKGWAFDDGNDVWMGRTISKDSRSGYETFKVIGGWSTPNSKSQINRQVIVDSDNRSGYSGIFSVEGKSCINRCFYVELIRGREQETRVWWTSNSIVVFCGTSGTYGTGSWPDGADINLMPI.

The Intravirion portion of the chain corresponds to 1-9 (MNPNQKIIT). The helical transmembrane segment at 10-30 (IGSVSLTIATVCFLMQIAILV) threads the bilayer. The involved in apical transport and lipid raft association stretch occupies residues 11 to 33 (GSVSLTIATVCFLMQIAILVTTV). The Virion surface portion of the chain corresponds to 31-469 (TTVTLHFKQY…DGADINLMPI (439 aa)). Residues 36-88 (HFKQYECDSPANNQVMPCEPIIIERNITEIVYLTNTTIEKEICPKLVEYRNWS) form a hypervariable stalk region region. 3 N-linked (GlcNAc...) asparagine; by host glycosylation sites follow: N61, N70, and N86. The segment at 91–469 (QCKITGFAPF…DGADINLMPI (379 aa)) is head of neuraminidase. Intrachain disulfides connect C92–C417, C124–C129, C183–C230, C232–C237, C278–C291, C280–C289, C318–C337, and C421–C447. R118 is a binding site for substrate. An N-linked (GlcNAc...) asparagine; by host glycan is attached at N146. D151 (proton donor/acceptor) is an active-site residue. R152 provides a ligand contact to substrate. N200 and N234 each carry an N-linked (GlcNAc...) asparagine; by host glycan. 276 to 277 (EE) provides a ligand contact to substrate. R292 provides a ligand contact to substrate. Ca(2+)-binding residues include D293, G297, and D324. Residues 326 to 350 (PRNNDRSSNSNCRNPNNDKGNHGVK) are disordered. The span at 331–343 (RSSNSNCRNPNND) shows a compositional bias: low complexity. Residue R371 coordinates substrate. N402 carries an N-linked (GlcNAc...) asparagine; by host glycan. The active-site Nucleophile is Y406.

Belongs to the glycosyl hydrolase 34 family. As to quaternary structure, homotetramer. It depends on Ca(2+) as a cofactor. Post-translationally, N-glycosylated.

The protein localises to the virion membrane. It is found in the host apical cell membrane. It carries out the reaction Hydrolysis of alpha-(2-&gt;3)-, alpha-(2-&gt;6)-, alpha-(2-&gt;8)- glycosidic linkages of terminal sialic acid residues in oligosaccharides, glycoproteins, glycolipids, colominic acid and synthetic substrates.. Its activity is regulated as follows. Inhibited by the neuraminidase inhibitors zanamivir (Relenza) and oseltamivir (Tamiflu). These drugs interfere with the release of progeny virus from infected cells and are effective against all influenza strains. Resistance to neuraminidase inhibitors is quite rare. Its function is as follows. Catalyzes the removal of terminal sialic acid residues from viral and cellular glycoconjugates. Cleaves off the terminal sialic acids on the glycosylated HA during virus budding to facilitate virus release. Additionally helps virus spread through the circulation by further removing sialic acids from the cell surface. These cleavages prevent self-aggregation and ensure the efficient spread of the progeny virus from cell to cell. Otherwise, infection would be limited to one round of replication. Described as a receptor-destroying enzyme because it cleaves a terminal sialic acid from the cellular receptors. May facilitate viral invasion of the upper airways by cleaving the sialic acid moieties on the mucin of the airway epithelial cells. Likely to plays a role in the budding process through its association with lipid rafts during intracellular transport. May additionally display a raft-association independent effect on budding. Plays a role in the determination of host range restriction on replication and virulence. Sialidase activity in late endosome/lysosome traffic seems to enhance virus replication. The polypeptide is Neuraminidase (Aves (whales)).